The sequence spans 722 residues: Polyribonucleotide nucleotidyltransferase (722 aa).

Positions 487 and 493 each coordinate Mg(2+). Residues 554–613 (PRMVSFKIHPDKIREVIGKGGATIQALTKETGCSIDIKDDGTVTIASTSAEGMAEAKARI) form the KH domain. One can recognise an S1 motif domain in the interval 623 to 691 (GKIYEGPVVK…ERGRLRLSLK (69 aa)).

This sequence belongs to the polyribonucleotide nucleotidyltransferase family. Mg(2+) serves as cofactor.

The protein resides in the cytoplasm. It carries out the reaction RNA(n+1) + phosphate = RNA(n) + a ribonucleoside 5'-diphosphate. Involved in mRNA degradation. Catalyzes the phosphorolysis of single-stranded polyribonucleotides processively in the 3'- to 5'-direction. The sequence is that of Polyribonucleotide nucleotidyltransferase from Polynucleobacter asymbioticus (strain DSM 18221 / CIP 109841 / QLW-P1DMWA-1) (Polynucleobacter necessarius subsp. asymbioticus).